The sequence spans 117 residues: Reprimo-like protein (117 aa).

The helical transmembrane segment at 64–84 (VAQIAVLCVLSLTVVFGVFFL) threads the bilayer. The residue at position 106 (S106) is a Phosphoserine.

Belongs to the reprimo family.

Its subcellular location is the membrane. The protein is Reprimo-like protein (Rprml) of Mus musculus (Mouse).